We begin with the raw amino-acid sequence, 358 residues long: Aromatic amino acid aminotransferase (358 aa).

Residue Lys-214 is modified to N6-(pyridoxal phosphate)lysine.

It belongs to the class-II pyridoxal-phosphate-dependent aminotransferase family. Homodimer. Requires pyridoxal 5'-phosphate as cofactor.

It carries out the reaction an aromatic L-alpha-amino acid + 2-oxoglutarate = an aromatic oxo-acid + L-glutamate. Aminotransferase that catalyzes the conversion of aromatic amino acids and 2-oxoglutarate into corresponding aromatic oxo acids and L-glutamate. The chain is Aromatic amino acid aminotransferase from Rhodococcus opacus (strain B4).